The following is a 410-amino-acid chain: Schlafen-like protein 1 (410 aa).

Disordered regions lie at residues 1 to 20 (MSLRKRSAQTQMWESPVMSQ) and 141 to 199 (LHHR…SGVR). Polar residues predominate over residues 8-20 (AQTQMWESPVMSQ). Pro residues predominate over residues 154-173 (SHSPGPSPGPSPGLRHPPLP). 264–271 (GVEDSGLV) contributes to the ATP binding site. The stretch at 370 to 401 (QKWAMELGKLEEKVKVLTLEKEQLQQQLRQRQ) forms a coiled coil.

It belongs to the Schlafen family. Subgroup I subfamily.

This Mus musculus (Mouse) protein is Schlafen-like protein 1 (Slfnl1).